An 837-amino-acid polypeptide reads, in one-letter code: Tuftelin-interacting protein 11 (837 aa).

Basic and acidic residues-rich tracts occupy residues 1 to 13 (MSLSHLYRDGEGR) and 53 to 64 (VWAERDSDDERP). 3 disordered regions span residues 1-21 (MSLSHLYRDGEGRIDDDDDER), 53-72 (VWAERDSDDERPSFGGKRAR), and 85-133 (LKKG…KGFA). The interval 1–50 (MSLSHLYRDGEGRIDDDDDERENFEITDWDLQNEFNPNRQRHWQTKEEAT) is required for interaction with DHX15. Ser2, Ser59, and Ser98 each carry phosphoserine. Residues 91-102 (EEAELEDSDDEE) show a composition bias toward acidic residues. A compositionally biased stretch (basic and acidic residues) spans 103–116 (KPVKQDDFPKDFGP). The residue at position 144 (Ser144) is a Phosphoserine. One can recognise a G-patch domain in the interval 149-195 (TKGIGQKLLQKMGYVPGRGLGKNAQGIINPIEAKQRKGKGAVGAYGS). Positions 179 to 236 (IEAKQRKGKGAVGAYGSERTTQSMQDFPVVDSEEEAEEEFQKELSQWRKDPSGSKKKP) are disordered. Ser210 is subject to Phosphoserine. Basic and acidic residues predominate over residues 217 to 231 (EFQKELSQWRKDPSG). The Nuclear localization signal signature appears at 700–705 (VKDKFN). Residues 710–734 (IMNRAVSSNVGAYMQPGARENIAYL) are required for nuclear speckle localization.

The protein belongs to the TFP11/STIP family. As to quaternary structure, identified in the spliceosome C complex. Found in the Intron Large (IL) complex, a post-mRNA release spliceosomal complex containing the excised intron, U2, U5 and U6 snRNPs, and splicing factors. Interacts with TUFT1. Interacts with DHX15; indicative for a recruitment of DHX15 to the IL complex. Interacts with GCFC2.

The protein resides in the cytoplasm. It localises to the nucleus. In terms of biological role, involved in pre-mRNA splicing, specifically in spliceosome disassembly during late-stage splicing events. Intron turnover seems to proceed through reactions in two lariat-intron associated complexes termed Intron Large (IL) and Intron Small (IS). In cooperation with DHX15 seems to mediate the transition of the U2, U5 and U6 snRNP-containing IL complex to the snRNP-free IS complex leading to efficient debranching and turnover of excised introns. May play a role in the differentiation of ameloblasts and odontoblasts or in the forming of the enamel extracellular matrix. This chain is Tuftelin-interacting protein 11 (TFIP11), found in Pongo abelii (Sumatran orangutan).